Here is a 191-residue protein sequence, read N- to C-terminus: dTTP/UTP pyrophosphatase (191 aa).

Asp68 functions as the Proton acceptor in the catalytic mechanism.

It belongs to the Maf family. YhdE subfamily. A divalent metal cation is required as a cofactor.

The protein localises to the cytoplasm. The enzyme catalyses dTTP + H2O = dTMP + diphosphate + H(+). It catalyses the reaction UTP + H2O = UMP + diphosphate + H(+). Nucleoside triphosphate pyrophosphatase that hydrolyzes dTTP and UTP. May have a dual role in cell division arrest and in preventing the incorporation of modified nucleotides into cellular nucleic acids. This is dTTP/UTP pyrophosphatase from Thermoanaerobacter pseudethanolicus (strain ATCC 33223 / 39E) (Clostridium thermohydrosulfuricum).